We begin with the raw amino-acid sequence, 328 residues long: H-2 class I histocompatibility antigen, K-Q alpha chain (328 aa).

The interval 1–71 (PRFISVGYVD…LLRYYNQSAG (71 aa)) is alpha-1. The Extracellular segment spans residues 1 to 265 (PRFISVGYVD…EPPPSAVSNT (265 aa)). Residue Asn-67 is glycosylated (N-linked (GlcNAc...) asparagine). The tract at residues 72-163 (GSHTIQRMYG…KNGNATLLRT (92 aa)) is alpha-2. A disulfide bond links Cys-82 and Cys-145. An N-linked (GlcNAc...) asparagine glycan is attached at Asn-157. The interval 164–255 (DSPKAHVTHH…GLPKPLTLRW (92 aa)) is alpha-3. The Ig-like C1-type domain maps to 166-252 (PKAHVTHHSR…YHQGLPKPLT (87 aa)). Cys-184 and Cys-240 form a disulfide bridge. A connecting peptide region spans residues 256-265 (EPPPSAVSNT). Residues 266 to 289 (VIIAVLVVLGAAIVTGAVVAFVMM) form a helical membrane-spanning segment. The Cytoplasmic segment spans residues 290–328 (RRRNTGGKGGDYALAPGSQTSDLSLPDCKVMVHDPHSLA). Residues Ser-310 and Ser-313 each carry the phosphoserine modification.

This sequence belongs to the MHC class I family. Heterodimer of an alpha chain and a beta chain (beta-2-microglobulin).

The protein localises to the membrane. Involved in the presentation of foreign antigens to the immune system. This chain is H-2 class I histocompatibility antigen, K-Q alpha chain (H2-K1), found in Mus musculus (Mouse).